The chain runs to 201 residues: Peptidyl-tRNA hydrolase (201 aa).

Tyr-14 is a tRNA binding site. The active-site Proton acceptor is His-19. TRNA is bound by residues Tyr-64, Asn-66, and Asn-113. Positions 178 to 201 are disordered; it reads PGPAMNRFNRKPEPPESGGEVAAK.

It belongs to the PTH family. In terms of assembly, monomer.

It is found in the cytoplasm. The enzyme catalyses an N-acyl-L-alpha-aminoacyl-tRNA + H2O = an N-acyl-L-amino acid + a tRNA + H(+). Functionally, hydrolyzes ribosome-free peptidyl-tRNAs (with 1 or more amino acids incorporated), which drop off the ribosome during protein synthesis, or as a result of ribosome stalling. In terms of biological role, catalyzes the release of premature peptidyl moieties from peptidyl-tRNA molecules trapped in stalled 50S ribosomal subunits, and thus maintains levels of free tRNAs and 50S ribosomes. The sequence is that of Peptidyl-tRNA hydrolase from Koribacter versatilis (strain Ellin345).